The sequence spans 501 residues: Raftlin-2 (501 aa).

Disordered stretches follow at residues Met1–Phe20 and Ser196–Glu239. A lipid anchor (N-myristoyl glycine) is attached at Gly2. A lipid anchor (S-palmitoyl cysteine) is attached at Cys3. A compositionally biased stretch (polar residues) spans Gly220 to Ser233. Ser405 is modified (phosphoserine). Positions Ala407–Glu449 are disordered. Thr409 is subject to Phosphothreonine. The span at Pro410–Lys425 shows a compositional bias: basic and acidic residues. Positions Thr427 to Ala441 are enriched in polar residues. At Ser430 the chain carries Phosphoserine.

It belongs to the raftlin family.

The protein resides in the cell membrane. Functionally, upon bacterial lipopolysaccharide stimulation, mediates clathrin-dependent internalization of TLR4 in dendritic cells, resulting in activation of TICAM1-mediated signaling and subsequent IFNB1 production. May regulate B-cell antigen receptor-mediated signaling. In Homo sapiens (Human), this protein is Raftlin-2 (RFTN2).